A 314-amino-acid chain; its full sequence is MKKKIAEYEVGEQVDVFLLIKTATKGIASNGKPFLTVILQDPSGDIEAKLWDVSPEVEKQYVAETIVKVAGDILNYKGRIQLRVKQIRVANENEVTDISDFVEKAPVKKEDMVEKITQYIFEMRNPNIQRLTRHLLNKHQNEFLDYPAATKNHHEFVSGLAYHVVSMLDLAKAISNLYPSLDKDLLYAGVILHDLGKVIELSGPISTTYTLEGNLLGHISIMVNEIGKAADELQIDAEEVLILQHIVLSHHGKAEWGSPKPPLVKEAEILHYIDNLDAKMNMMDRALGRTKPGEYTERVFALDNRSFYKPSFHN.

Residues 163–279 form the HD domain; the sequence is HVVSMLDLAK…LHYIDNLDAK (117 aa).

The protein belongs to the YhaM family.

Functionally, shows a 3'-5' exoribonuclease activity. The polypeptide is 3'-5' exoribonuclease YhaM (Bacillus anthracis (strain CDC 684 / NRRL 3495)).